A 393-amino-acid polypeptide reads, in one-letter code: Formate-dependent phosphoribosylglycinamide formyltransferase (393 aa).

N(1)-(5-phospho-beta-D-ribosyl)glycinamide-binding positions include 22–23 (EL) and glutamate 82. ATP contacts are provided by residues arginine 114, lysine 155, 160–165 (SSGKGQ), 195–198 (EGFI), and glutamate 203. The ATP-grasp domain occupies 119–308 (RLAAEELKLP…QFALHARAIL (190 aa)). 2 residues coordinate Mg(2+): glutamate 267 and glutamate 279. Residues aspartate 286, lysine 356, and 363-364 (RR) each bind N(1)-(5-phospho-beta-D-ribosyl)glycinamide.

The protein belongs to the PurK/PurT family. In terms of assembly, homodimer.

It carries out the reaction N(1)-(5-phospho-beta-D-ribosyl)glycinamide + formate + ATP = N(2)-formyl-N(1)-(5-phospho-beta-D-ribosyl)glycinamide + ADP + phosphate + H(+). It functions in the pathway purine metabolism; IMP biosynthesis via de novo pathway; N(2)-formyl-N(1)-(5-phospho-D-ribosyl)glycinamide from N(1)-(5-phospho-D-ribosyl)glycinamide (formate route): step 1/1. In terms of biological role, involved in the de novo purine biosynthesis. Catalyzes the transfer of formate to 5-phospho-ribosyl-glycinamide (GAR), producing 5-phospho-ribosyl-N-formylglycinamide (FGAR). Formate is provided by PurU via hydrolysis of 10-formyl-tetrahydrofolate. The protein is Formate-dependent phosphoribosylglycinamide formyltransferase of Pseudomonas syringae pv. syringae (strain B728a).